Here is a 214-residue protein sequence, read N- to C-terminus: Potassium/proton antiporter CemA (214 aa).

2 consecutive transmembrane segments (helical) span residues 92-112 (ILHL…SILG) and 174-194 (IISG…KYWI).

This sequence belongs to the CemA family.

The protein resides in the plastid. It localises to the chloroplast inner membrane. The catalysed reaction is K(+)(in) + H(+)(out) = K(+)(out) + H(+)(in). In terms of biological role, contributes to K(+)/H(+) antiport activity by supporting proton efflux to control proton extrusion and homeostasis in chloroplasts in a light-dependent manner to modulate photosynthesis. Prevents excessive induction of non-photochemical quenching (NPQ) under continuous-light conditions. Indirectly promotes efficient inorganic carbon uptake into chloroplasts. This is Potassium/proton antiporter CemA from Oenothera argillicola (Appalachian evening primrose).